The chain runs to 28 residues: Putative antitoxin AF_1079 (28 aa).

It belongs to the UPF0165 family.

Possibly the antitoxin component of a type II toxin-antitoxin (TA) system. The sequence is that of Putative antitoxin AF_1079 from Archaeoglobus fulgidus (strain ATCC 49558 / DSM 4304 / JCM 9628 / NBRC 100126 / VC-16).